Here is a 309-residue protein sequence, read N- to C-terminus: Prephenate dehydratase (309 aa).

The 189-residue stretch at 3 to 191 folds into the Prephenate dehydratase domain; sequence GIAYLGPEGT…ARTRFVLVGC (189 aa). Residues 205–282 enclose the ACT domain; that stretch reads SVVLRLDNVP…ADVRYLGSWP (78 aa).

As to quaternary structure, homodimer.

It catalyses the reaction prephenate + H(+) = 3-phenylpyruvate + CO2 + H2O. It participates in amino-acid biosynthesis; L-phenylalanine biosynthesis; phenylpyruvate from prephenate: step 1/1. This is Prephenate dehydratase (pheA) from Mycolicibacterium gilvum (strain PYR-GCK) (Mycobacterium gilvum (strain PYR-GCK)).